A 199-amino-acid chain; its full sequence is Holliday junction branch migration complex subunit RuvA (199 aa).

The interval methionine 1–arginine 64 is domain I. The interval threonine 65–glycine 143 is domain II. The tract at residues glycine 144 to proline 148 is flexible linker. A domain III region spans residues alanine 149 to lysine 199.

This sequence belongs to the RuvA family. As to quaternary structure, homotetramer. Forms an RuvA(8)-RuvB(12)-Holliday junction (HJ) complex. HJ DNA is sandwiched between 2 RuvA tetramers; dsDNA enters through RuvA and exits via RuvB. An RuvB hexamer assembles on each DNA strand where it exits the tetramer. Each RuvB hexamer is contacted by two RuvA subunits (via domain III) on 2 adjacent RuvB subunits; this complex drives branch migration. In the full resolvosome a probable DNA-RuvA(4)-RuvB(12)-RuvC(2) complex forms which resolves the HJ.

It is found in the cytoplasm. The RuvA-RuvB-RuvC complex processes Holliday junction (HJ) DNA during genetic recombination and DNA repair, while the RuvA-RuvB complex plays an important role in the rescue of blocked DNA replication forks via replication fork reversal (RFR). RuvA specifically binds to HJ cruciform DNA, conferring on it an open structure. The RuvB hexamer acts as an ATP-dependent pump, pulling dsDNA into and through the RuvAB complex. HJ branch migration allows RuvC to scan DNA until it finds its consensus sequence, where it cleaves and resolves the cruciform DNA. The protein is Holliday junction branch migration complex subunit RuvA of Citrifermentans bemidjiense (strain ATCC BAA-1014 / DSM 16622 / JCM 12645 / Bem) (Geobacter bemidjiensis).